A 293-amino-acid chain; its full sequence is Cytidine deaminase 6 (293 aa).

CMP/dCMP-type deaminase domains lie at 16–147 and 178–293; these read RGPS…FGPD and EDCS…TNKN. Residue 57 to 59 coordinates substrate; sequence NVE. A Zn(2+)-binding site is contributed by His-70. Glu-72 functions as the Proton donor in the catalytic mechanism. Zn(2+) is bound by residues Cys-103 and Cys-106.

It belongs to the cytidine and deoxycytidylate deaminase family. Homodimer. Zn(2+) serves as cofactor.

It catalyses the reaction cytidine + H2O + H(+) = uridine + NH4(+). The enzyme catalyses 2'-deoxycytidine + H2O + H(+) = 2'-deoxyuridine + NH4(+). Its function is as follows. This enzyme scavenges exogenous and endogenous cytidine and 2'-deoxycytidine for UMP synthesis. This chain is Cytidine deaminase 6 (CDA6), found in Arabidopsis thaliana (Mouse-ear cress).